Reading from the N-terminus, the 281-residue chain is Glycerol uptake facilitator protein (281 aa).

The Cytoplasmic segment spans residues 1–5 (MSQTS). Residues 6–34 (TLKGQCIAEFLGTGLLIFFGVGCVAALKV) form a helical membrane-spanning segment. Topologically, residues 35–39 (AGASF) are periplasmic. Residues 40-60 (GQWEISVIWGLGVAMAIYLTA) form a helical membrane-spanning segment. Topologically, residues 61-63 (GVS) are cytoplasmic. An intramembrane segment occupies 64-67 (GAHL). Positions 68–70 (NPA) match the NPA 1 motif. Positions 68-78 (NPAVTIALWLF) form an intramembrane region, helical. Residues 79–84 (ACFDKR) are Cytoplasmic-facing. The helical transmembrane segment at 85 to 108 (KVIPFIVSQVAGAFCAAALVYGLY) threads the bilayer. At 109-143 (YNLFFDFEQTHHIVRGSVESVDLAGTFSTYPNPHI) the chain is on the periplasmic side. Residues 144–169 (NFVQAFAVEMVITAILMGLILALTDD) form a helical membrane-spanning segment. Residues 170–177 (GNGVPRGP) are Cytoplasmic-facing. Residues 178–194 (LAPLLIGLLIAVIGASM) form a helical membrane-spanning segment. Residues 195–198 (GPLT) are Periplasmic-facing. The stretch at 199 to 202 (GFAM) is an intramembrane region. The NPA 2 signature appears at 203-205 (NPA). The helical intramembrane region spans 203–216 (NPARDFGPKVFAWL). Residues 217-231 (AGWGNVAFTGGRDIP) lie on the Periplasmic side of the membrane. Residues 232-254 (YFLVPLFSPIVGAIVGAFAYRKL) form a helical membrane-spanning segment. The Cytoplasmic segment spans residues 255–281 (IGRHLPCDICVVEEKETTTPSEQKASL).

Belongs to the MIP/aquaporin (TC 1.A.8) family. Homotetramer.

It localises to the cell inner membrane. It catalyses the reaction glycerol(in) = glycerol(out). Mediates glycerol diffusion across the cytoplasmic membrane via a pore-type mechanism. This Shigella flexneri protein is Glycerol uptake facilitator protein (glpF).